Consider the following 877-residue polypeptide: Phosphoenolpyruvate carboxylase (877 aa).

Catalysis depends on residues histidine 138 and lysine 544.

It belongs to the PEPCase type 1 family. Mg(2+) is required as a cofactor.

The enzyme catalyses oxaloacetate + phosphate = phosphoenolpyruvate + hydrogencarbonate. Its function is as follows. Forms oxaloacetate, a four-carbon dicarboxylic acid source for the tricarboxylic acid cycle. This chain is Phosphoenolpyruvate carboxylase, found in Vibrio vulnificus (strain YJ016).